The chain runs to 524 residues: Keratin, type II cytoskeletal 72 (524 aa).

The interval 1–136 (MSRQLNLYPG…DPEIQKVRAQ (136 aa)) is head. Residues 137–172 (EREQIKALNNKFASFIDKVRFLEQQNQVLGTKWELL) form a coil 1A region. Positions 137–450 (EREQIKALNN…KLLEGEECRM (314 aa)) constitute an IF rod domain. A linker 1 region spans residues 173–191 (QQLDLNNCKNNLEPILEGY). The interval 192–283 (TSNLRKQLEM…CLYEGEIAQL (92 aa)) is coil 1B. The interval 284–307 (QSHISDTSVILSMDNNRDLDLDSI) is linker 12. The interval 308–446 (IAQVRAQYEE…ATYRKLLEGE (139 aa)) is coil 2. Residues 447–524 (ECRMSGEYPN…SSCATKKASR (78 aa)) are tail. The tract at residues 495 to 524 (KTKGSCGGSELKDAPAKTSGSSCATKKASR) is disordered.

Belongs to the intermediate filament family. Heterotetramer of two type I and two type II keratins.

In terms of biological role, has a role in hair formation. Specific component of keratin intermediate filaments in the inner root sheath (IRS) of the hair follicle. This is Keratin, type II cytoskeletal 72 (KRT72) from Bos taurus (Bovine).